A 177-amino-acid chain; its full sequence is Large ribosomal subunit protein uL6 (177 aa).

It belongs to the universal ribosomal protein uL6 family. As to quaternary structure, part of the 50S ribosomal subunit.

Functionally, this protein binds to the 23S rRNA, and is important in its secondary structure. It is located near the subunit interface in the base of the L7/L12 stalk, and near the tRNA binding site of the peptidyltransferase center. This is Large ribosomal subunit protein uL6 from Sinorhizobium medicae (strain WSM419) (Ensifer medicae).